The following is a 55-amino-acid chain: Seripauperin-7 (55 aa).

The signal sequence occupies residues 1–20; that stretch reads MVKLTSIAAGVAAIAAGASA.

It belongs to the SRP1/TIP1 family. Seripauperin subfamily.

In Saccharomyces cerevisiae (strain ATCC 204508 / S288c) (Baker's yeast), this protein is Seripauperin-7 (PAU7).